The primary structure comprises 270 residues: NAD kinase (270 aa).

Asp-45 acts as the Proton acceptor in catalysis. NAD(+) contacts are provided by residues 45–46 (DG), 121–122 (NE), Lys-147, Asp-149, 160–165 (TAYSKS), and Ala-184.

It belongs to the NAD kinase family. A divalent metal cation serves as cofactor.

The protein localises to the cytoplasm. The enzyme catalyses NAD(+) + ATP = ADP + NADP(+) + H(+). Functionally, involved in the regulation of the intracellular balance of NAD and NADP, and is a key enzyme in the biosynthesis of NADP. Catalyzes specifically the phosphorylation on 2'-hydroxyl of the adenosine moiety of NAD to yield NADP. In Lactobacillus johnsonii (strain CNCM I-12250 / La1 / NCC 533), this protein is NAD kinase.